Reading from the N-terminus, the 505-residue chain is Trans-cinnamate 4-monooxygenase (505 aa).

The chain crosses the membrane as a helical span at residues 3–23 (LILLEKSLLAVFFAVIFSIIV). (E)-cinnamate is bound by residues 213–218 (RSRLAQ) and Ala-306. Heme is bound at residue Cys-447.

The protein belongs to the cytochrome P450 family. Heme serves as cofactor. As to expression, mostly expressed in stems, and, to a lower extent, in bulbs, roots, leaves and flowers.

The protein localises to the membrane. The enzyme catalyses (E)-cinnamate + reduced [NADPH--hemoprotein reductase] + O2 = (E)-4-coumarate + oxidized [NADPH--hemoprotein reductase] + H2O + H(+). Its pathway is alkaloid biosynthesis. It functions in the pathway phenylpropanoid metabolism; trans-4-coumarate biosynthesis; trans-4-coumarate from trans-cinnamate: step 1/1. Functionally, catalyzes the first oxidative step of the phenylpropanoid pathway in higher plants by transforming trans-cinnamate into p-coumarate. The compounds formed by this pathway are essential components for lignification, pollination, and defense against ultraviolet light, predators and pathogens. Trans-4-coumarate is a precursor to all amaryllidaceae alkaloids such as galanthamine, lycorine and haemanthamine, and including haemanthamine- and crinamine-type alkaloids, promising anticancer agents. The chain is Trans-cinnamate 4-monooxygenase from Narcissus pseudonarcissus (Daffodil).